The following is a 216-amino-acid chain: Pyrophosphatase PpaX (216 aa).

Asp9 serves as the catalytic Nucleophile.

The protein belongs to the HAD-like hydrolase superfamily. PpaX family. Mg(2+) serves as cofactor.

It catalyses the reaction diphosphate + H2O = 2 phosphate + H(+). Functionally, hydrolyzes pyrophosphate formed during P-Ser-HPr dephosphorylation by HPrK/P. Might play a role in controlling the intracellular pyrophosphate pool. The protein is Pyrophosphatase PpaX of Bacillus cereus (strain ATCC 10987 / NRS 248).